The primary structure comprises 754 residues: Nibrin (754 aa).

Residues 24–83 enclose the FHA domain; the sequence is YVVGRKNCAILIENDQSISRNHAVLTANFSVTNLSQTDEIPVLTLKDNSKYGTFVNEEKM. BRCT domains lie at 105–181 and 224–315; these read KFRI…TEFL and GKTF…LAVI. The interval 111 to 328 is mediates interaction with SP100; that stretch reads EPLVACSSCL…TKNYCDPQGH (218 aa). The tract at residues 221–402 is interaction with MTOR, MAPKAP1 and RICTOR; sequence IFKGKTFIFL…FRMLSQDAPT (182 aa). Phosphoserine; by ATM is present on Ser278. Residues 326-346 form a disordered region; that stretch reads QGHPSTGLKTTTPGPSLSQGV. The segment covering 328–346 has biased composition (polar residues); that stretch reads HPSTGLKTTTPGPSLSQGV. Thr337 carries the post-translational modification Phosphothreonine. Ser343 carries the phosphoserine; by ATM modification. Ser347 bears the Phosphoserine mark. Lys388 bears the N6-lactoyllysine mark. 2 disordered regions span residues 396 to 415 and 430 to 478; these read LSQD…NNNS and QLSP…MSSC. Position 397 is a phosphoserine (Ser397). Phosphothreonine is present on Thr402. Composition is skewed to polar residues over residues 430 to 440 and 447 to 462; these read QLSPTKLPSIN and SQQQ…FQPS. Ser432 carries the phosphoserine; by CDK2 modification. A Glycyl lysine isopeptide (Lys-Gly) (interchain with G-Cter in ubiquitin) cross-link involves residue Lys435. A Nuclear localization signal motif is present at residues 461 to 467; that stretch reads PSTKKRE. Ser509 and Ser518 each carry phosphoserine. Residues Lys529, Lys571, and Lys582 each participate in a glycyl lysine isopeptide (Lys-Gly) (interchain with G-Cter in SUMO2) cross-link. Residues Ser615 and Ser673 each carry the phosphoserine modification. Glycyl lysine isopeptide (Lys-Gly) (interchain with G-Cter in ubiquitin) cross-links involve residues Lys686, Lys690, and Lys735. Residues 740–749 carry the FxF/Y motif motif; sequence ADDLFRYNPY.

The protein belongs to the Nibrin family. In terms of assembly, component of the MRN complex composed of two heterodimers RAD50 and MRE11 associated with a single NBN. The MRN complexes dimerize on DNA to form joined MRN-MRN oligomers required for DNA double-strand break repair. As part of the MRN complex, interacts with MCM9; the interaction recruits the complex to DNA repair sites. Component of the BASC complex, at least composed of BRCA1, MSH2, MSH6, MLH1, ATM, BLM, RAD50, MRE11 and NBN. Interacts with histone H2AX; this requires phosphorylation of H2AX on 'Ser-139' and promotes NBN recruitment to DNA damage sites. Interacts with (phosphorylated) MDC1; promoting NBN recruitment to DNA damage sites. Interacts with (phosphorylated) RAD17; promoting NBN recruitment to DNA damage sites. Interacts (via FxF/Y motif) with ATM. Interacts with HJURP. Interacts with INTS3. Interacts with KPNA2. Interacts with TERF2; interaction is disrupted upon NBN phosphorylation by CDK2. Interacts with (phosphorylated) RBBP8/CtIP; the interaction links the role of the MRN complex in DNA double-strand break sensing to resection. Interacts with SP100; recruits NBN to PML bodies. Interacts with ATF2. Interacts with MTOR, MAPKAP1 isoform 2 and RICTOR; indicative for an association with the mTORC2 complex. Interacts with MRNIP. Interacts with UFL1; promoting UFL1 recruitment to double-strand breaks following DNA damage. Interacts with CYREN (via XLF motif). As to quaternary structure, (Microbial infection) Interacts with herpes simplex virus 1 protein UL12. In terms of processing, phosphorylated by ATM in response of ionizing radiation, and such phosphorylation is responsible intra-S phase checkpoint control and telomere maintenance. Phosphorylated at Ser-432 by CDK2 in S/G2 phases abolishes interaction with TERF2, enabling DCLRE1B/Apollo recruitment to telomeres. Phosphorylation at Ser-432 in response to dysfunctional telomeres promotes non-homologous end joining repair at telomeres, while dephosphorylation by PPP1CA promotes microhomology-mediated end-joining (MMEJ) repair. Post-translationally, ubiquitinated at Lys-435 via 'Lys-6'-linked ubiquitin chains by RNF8, promoting NBN recruitment to DNA double-strand breaks (DSBs). Ubiquitinated at Lys-686 and Lys-689 via 'Lys-63'-linked ubiquitin chains by PELI1: ubiquitination takes place following PELI1 phosphorylation and promotes ATM activation and DNA repair. Ubiquitinated at Lys-735 via 'Lys-63'-linked ubiquitin chains by the SCF(SKP2) complex: ubiquitination takes place following SKP2 phosphorylation and promotes ATM activation and DNA repair. Lactylation at Lys-388 by KAT5 in response to DNA damage promotes recruitment of the MRN complex to DNA damage sites. Delactylated by HDAC3. Ubiquitous. Expressed at high levels in testis.

Its subcellular location is the nucleus. The protein localises to the chromosome. It is found in the PML body. The protein resides in the telomere. Component of the MRN complex, which plays a central role in double-strand break (DSB) repair, DNA recombination, maintenance of telomere integrity and meiosis. The MRN complex is involved in the repair of DNA double-strand breaks (DSBs) via homologous recombination (HR), an error-free mechanism which primarily occurs during S and G2 phases. The complex (1) mediates the end resection of damaged DNA, which generates proper single-stranded DNA, a key initial steps in HR, and is (2) required for the recruitment of other repair factors and efficient activation of ATM and ATR upon DNA damage. The MRN complex possesses single-strand endonuclease activity and double-strand-specific 3'-5' exonuclease activity, which are provided by MRE11, to initiate end resection, which is required for single-strand invasion and recombination. Within the MRN complex, NBN acts as a protein-protein adapter, which specifically recognizes and binds phosphorylated proteins, promoting their recruitment to DNA damage sites. Recruits MRE11 and RAD50 components of the MRN complex to DSBs in response to DNA damage. Promotes the recruitment of PI3/PI4-kinase family members ATM, ATR, and probably DNA-PKcs to the DNA damage sites, activating their functions. Mediates the recruitment of phosphorylated RBBP8/CtIP to DSBs, leading to cooperation between the MRN complex and RBBP8/CtIP to initiate end resection. RBBP8/CtIP specifically promotes the endonuclease activity of the MRN complex to clear DNA ends containing protein adducts. The MRN complex is also required for the processing of R-loops. NBN also functions in telomere length maintenance via its interaction with TERF2: interaction with TERF2 during G1 phase preventing recruitment of DCLRE1B/Apollo to telomeres. NBN also promotes DNA repair choice at dysfunctional telomeres: NBN phosphorylation by CDK2 promotes non-homologous end joining repair at telomeres, while unphosphorylated NBN promotes microhomology-mediated end-joining (MMEJ) repair. Enhances AKT1 phosphorylation possibly by association with the mTORC2 complex. The sequence is that of Nibrin from Homo sapiens (Human).